Here is a 160-residue protein sequence, read N- to C-terminus: Protein max (160 aa).

Residues 1 to 13 (MSDNDDIEVESDE) are compositionally biased toward acidic residues. Residues 1–40 (MSDNDDIEVESDEEQPRFQSAADKRAHHNALERKRRDHIK) form a disordered region. N-acetylserine is present on Ser-2. Phosphoserine occurs at positions 2 and 11. The bHLH domain maps to 23–74 (DKRAHHNALERKRRDHIKDSFHSLRDSVPSLQGEKASRAQILDKATEYIQYM). Positions 29 to 40 (NALERKRRDHIK) are enriched in basic and acidic residues. Lys-66 bears the N6-acetyllysine mark. The leucine-zipper stretch occupies residues 81–102 (HQQDIDDLKRQNALLEQQVRAL). The disordered stretch occupies residues 104 to 160 (KARSSAQLQTNYPSSDNSLYTNAKGGTISAFDGGSDSSSESEPEEPQSRKKLRMEAS). At Ser-107 the chain carries Phosphoserine. Residues 107 to 124 (SSAQLQTNYPSSDNSLYT) are compositionally biased toward polar residues. Lys-153 and Lys-154 each carry N6-acetyllysine.

The protein belongs to the MAX family. In terms of assembly, efficient DNA binding requires dimerization with another bHLH protein. Binds DNA as a heterodimer with MYC or MAD. Part of the E2F6.com-1 complex in G0 phase composed of E2F6, MGA, MAX, TFDP1, CBX3, BAT8, EUHMTASE1, RING1, RNF2, MBLR, L3MBTL2 and YAF2. Component of some MLL1/MLL complex, at least composed of the core components KMT2A/MLL1, ASH2L, HCFC1/HCF1, WDR5 and RBBP5, as well as the facultative components BACC1, CHD8, E2F6, HSP70, INO80C, KANSL1, LAS1L, MAX, MCRS1, MGA, MYST1/MOF, PELP1, PHF20, PRP31, RING2, RUVB1/TIP49A, RUVB2/TIP49B, SENP3, TAF1, TAF4, TAF6, TAF7, TAF9 and TEX10. Interacts with SPAG9. The heterodimer MYC:MAX interacts with ABI1; the interaction may enhance MYC:MAX transcriptional activity. Post-translationally, phosphorylated.

The protein localises to the nucleus. It is found in the cell projection. Its subcellular location is the dendrite. Its function is as follows. Transcription regulator. Forms a sequence-specific DNA-binding protein complex with MYC or MAD which recognizes the core sequence 5'-CAC[GA]TG-3'. The MYC:MAX complex is a transcriptional activator, whereas the MAD:MAX complex is a repressor. CpG methylation of the recognition site greatly inhibits DNA binding, suggesting that DNA methylation may regulate the MYC:MAX complex in vivo. May repress transcription via the recruitment of a chromatin remodeling complex containing H3 'Lys-9' histone methyltransferase activity. Represses MYC transcriptional activity from E-box elements. The polypeptide is Protein max (Mus musculus (Mouse)).